We begin with the raw amino-acid sequence, 496 residues long: Maintenance of mitochondrial morphology protein 1 (496 aa).

Residues 1–22 (MSSQLNDPTPIPAQSSLSFTQG) lie on the Lumenal side of the membrane. The helical transmembrane segment at 23-43 (FLLGQLSVVLLIAAFIKFFIF) threads the bilayer. The Cytoplasmic portion of the chain corresponds to 44-496 (GEAPPPPSRG…SLPGGGVTTT (453 aa)). Disordered stretches follow at residues 50–96 (PSRG…VPSS), 276–331 (PLDT…KSNV), 395–433 (GRTGVRTGDDSETGSNAPRSSTAADASGPAHHEDSSREP), and 449–496 (DLAS…VTTT). The span at 54-64 (LSHRSATHRRS) shows a compositional bias: basic residues. Over residues 65-74 (NSIYSSTQHD) the composition is skewed to polar residues. Residues 75 to 84 (GNTRTLREKP) show a composition bias toward basic and acidic residues. Residues 85-96 (SNSNVLRPVPSS) are compositionally biased toward polar residues. The region spanning 131–388 (QPESLDWFNV…EPRVQVVGLP (258 aa)) is the SMP-LTD domain. Residues 276–287 (PLDTPSHSPSPP) are compositionally biased toward pro residues. Polar residues predominate over residues 407–418 (TGSNAPRSSTAA). Composition is skewed to basic and acidic residues over residues 424-433 (AHHEDSSREP) and 462-474 (GDLRSRSMTREES).

Belongs to the MMM1 family. In terms of assembly, homodimer. Component of the ER-mitochondria encounter structure (ERMES) or MDM complex, composed of mmm1, mdm10, mdm12 and mdm34. A mmm1 homodimer associates with one molecule of mdm12 on each side in a pairwise head-to-tail manner, and the SMP-LTD domains of mmm1 and mdm12 generate a continuous hydrophobic tunnel for phospholipid trafficking.

It is found in the endoplasmic reticulum membrane. Component of the ERMES/MDM complex, which serves as a molecular tether to connect the endoplasmic reticulum (ER) and mitochondria. Components of this complex are involved in the control of mitochondrial shape and protein biogenesis, and function in nonvesicular lipid trafficking between the ER and mitochondria. The mdm12-mmm1 subcomplex functions in the major beta-barrel assembly pathway that is responsible for biogenesis of all outer membrane beta-barrel proteins, and acts in a late step after the SAM complex. The mdm10-mdm12-mmm1 subcomplex further acts in the TOM40-specific pathway after the action of the mdm12-mmm1 complex. Essential for establishing and maintaining the structure of mitochondria and maintenance of mtDNA nucleoids. In Neosartorya fischeri (strain ATCC 1020 / DSM 3700 / CBS 544.65 / FGSC A1164 / JCM 1740 / NRRL 181 / WB 181) (Aspergillus fischerianus), this protein is Maintenance of mitochondrial morphology protein 1.